The primary structure comprises 99 residues: Large ribosomal subunit protein bL27 (99 aa).

Positions 1 to 21 (MAHKKGGGSTRNGRDSRAKRL) are disordered.

This sequence belongs to the bacterial ribosomal protein bL27 family.

The protein is Large ribosomal subunit protein bL27 of Thermomicrobium roseum (strain ATCC 27502 / DSM 5159 / P-2).